A 146-amino-acid chain; its full sequence is Hemoglobin subunit beta (146 aa).

Valine 1 is subject to N-acetylvaline. One can recognise a Globin domain in the interval 2–146 (DLTAEEKAAV…VANALAHKYH (145 aa)). Phosphoserine is present on serine 44. At lysine 59 the chain carries N6-acetyllysine. A heme b-binding site is contributed by histidine 63. N6-acetyllysine is present on lysine 82. Histidine 92 provides a ligand contact to heme b. S-nitrosocysteine is present on cysteine 93. N6-acetyllysine is present on lysine 144.

This sequence belongs to the globin family. As to quaternary structure, heterotetramer of two alpha chains and two beta chains. Red blood cells.

In terms of biological role, involved in oxygen transport from the lung to the various peripheral tissues. This is Hemoglobin subunit beta (HBB) from Rhinoceros unicornis (Greater Indian rhinoceros).